A 253-amino-acid chain; its full sequence is Alpha-acetolactate decarboxylase (253 aa).

Belongs to the alpha-acetolactate decarboxylase family.

The enzyme catalyses (2S)-2-acetolactate + H(+) = (R)-acetoin + CO2. It participates in polyol metabolism; (R,R)-butane-2,3-diol biosynthesis; (R,R)-butane-2,3-diol from pyruvate: step 2/3. Its function is as follows. Converts acetolactate into acetoin. This is Alpha-acetolactate decarboxylase (alsD) from Bacillus licheniformis (strain ATCC 14580 / DSM 13 / JCM 2505 / CCUG 7422 / NBRC 12200 / NCIMB 9375 / NCTC 10341 / NRRL NRS-1264 / Gibson 46).